A 918-amino-acid chain; its full sequence is Dual serine/threonine and tyrosine protein kinase (918 aa).

The span at 1–19 shows a compositional bias: basic and acidic residues; sequence MQKDGTRSSRRMEEGDRRN. Residues 1 to 29 are disordered; that stretch reads MQKDGTRSSRRMEEGDRRNGSTGSSGSVS. The Protein kinase domain occupies 643 to 897; it reads PRIGRELGRG…PLMGIVQPML (255 aa). ATP is bound by residues 649 to 657 and lysine 672; that span reads LGRGQYGVV. Aspartate 768 acts as the Proton acceptor in catalysis.

It belongs to the protein kinase superfamily. Ser/Thr protein kinase family.

It localises to the cytoplasm. It is found in the cell membrane. Its subcellular location is the apical cell membrane. The protein localises to the basolateral cell membrane. The protein resides in the cell junction. The enzyme catalyses L-seryl-[protein] + ATP = O-phospho-L-seryl-[protein] + ADP + H(+). It catalyses the reaction L-threonyl-[protein] + ATP = O-phospho-L-threonyl-[protein] + ADP + H(+). The catalysed reaction is L-tyrosyl-[protein] + ATP = O-phospho-L-tyrosyl-[protein] + ADP + H(+). May act as a positive regulator of ERK phosphorylation downstream of fibroblast growth factor-receptor activation. May induce both caspase-dependent apoptosis and caspase-independent cell death. May play a role in the embryonic development. The sequence is that of Dual serine/threonine and tyrosine protein kinase (dstyk) from Xenopus tropicalis (Western clawed frog).